Here is a 240-residue protein sequence, read N- to C-terminus: UDP-2,3-diacylglucosamine hydrolase (240 aa).

The Mn(2+) site is built by Asp-7, His-9, Asp-40, Asn-78, and His-113. 78-79 contacts substrate; it reads NR. Residues Asp-121, Ser-159, Lys-166, and His-194 each coordinate substrate. Positions 194 and 196 each coordinate Mn(2+).

The protein belongs to the LpxH family. Mn(2+) serves as cofactor.

It is found in the cell inner membrane. It carries out the reaction UDP-2-N,3-O-bis[(3R)-3-hydroxytetradecanoyl]-alpha-D-glucosamine + H2O = 2-N,3-O-bis[(3R)-3-hydroxytetradecanoyl]-alpha-D-glucosaminyl 1-phosphate + UMP + 2 H(+). The protein operates within glycolipid biosynthesis; lipid IV(A) biosynthesis; lipid IV(A) from (3R)-3-hydroxytetradecanoyl-[acyl-carrier-protein] and UDP-N-acetyl-alpha-D-glucosamine: step 4/6. Hydrolyzes the pyrophosphate bond of UDP-2,3-diacylglucosamine to yield 2,3-diacylglucosamine 1-phosphate (lipid X) and UMP by catalyzing the attack of water at the alpha-P atom. Involved in the biosynthesis of lipid A, a phosphorylated glycolipid that anchors the lipopolysaccharide to the outer membrane of the cell. The chain is UDP-2,3-diacylglucosamine hydrolase from Pseudomonas putida (strain ATCC 47054 / DSM 6125 / CFBP 8728 / NCIMB 11950 / KT2440).